The sequence spans 940 residues: Phosphoenolpyruvate carboxylase (940 aa).

Catalysis depends on residues His138 and Lys603.

This sequence belongs to the PEPCase type 1 family. The cofactor is Mg(2+).

The enzyme catalyses oxaloacetate + phosphate = phosphoenolpyruvate + hydrogencarbonate. Forms oxaloacetate, a four-carbon dicarboxylic acid source for the tricarboxylic acid cycle. The sequence is that of Phosphoenolpyruvate carboxylase from Streptococcus thermophilus (strain ATCC BAA-250 / LMG 18311).